A 208-amino-acid chain; its full sequence is Ypt/Rab-type GTPase ypt71 (208 aa).

GTP is bound by residues 17-23 (SGVGKTC), 33-40 (FSREYKAT), G66, 124-127 (NQID), and 158-160 (SAK). Residues 37-45 (YKATIGADF) carry the Effector region motif. 2 S-geranylgeranyl cysteine lipidation sites follow: C206 and C208. C208 is subject to Cysteine methyl ester.

Belongs to the small GTPase superfamily. Rab family.

It localises to the vacuole membrane. With respect to regulation, rab activation is generally mediated by a guanine exchange factor (GEF), while inactivation through hydrolysis of bound GTP is catalyzed by a GTPase activating protein (GAP). Ypt/Rab-type GTPases are key regulators of membrane trafficking and intracellular vesicular transport. They act as molecular switches that convert between GTP-bound and GDP-bound states, and regulate virtually all steps of membrane traffic from the formation of the transport vesicle at the donor membrane to its fusion at the target membrane. In the GDP-bound state, Ypt proteins are predominantly cytosolic, solubilized through the interaction with a GDP dissociation inhibitor (GDI). In the GTP-bound state, the proteins are membrane bound and interact with specific effector proteins that select cargo, promote vesicle movement, or verify the correct site of fusion. Act antagonistically to ypt7 in regulating vacuolar morphology, promoting vacuolar fission. This is Ypt/Rab-type GTPase ypt71 (ypt71) from Schizosaccharomyces pombe (strain 972 / ATCC 24843) (Fission yeast).